We begin with the raw amino-acid sequence, 155 residues long: Regulatory protein RecX (155 aa).

Belongs to the RecX family.

It localises to the cytoplasm. Modulates RecA activity. The chain is Regulatory protein RecX from Pseudomonas syringae pv. tomato (strain ATCC BAA-871 / DC3000).